The sequence spans 429 residues: Glutamate-1-semialdehyde 2,1-aminomutase (429 aa).

K272 is subject to N6-(pyridoxal phosphate)lysine.

Belongs to the class-III pyridoxal-phosphate-dependent aminotransferase family. HemL subfamily. Requires pyridoxal 5'-phosphate as cofactor.

It localises to the cytoplasm. The catalysed reaction is (S)-4-amino-5-oxopentanoate = 5-aminolevulinate. It functions in the pathway porphyrin-containing compound metabolism; protoporphyrin-IX biosynthesis; 5-aminolevulinate from L-glutamyl-tRNA(Glu): step 2/2. In Methanothrix thermoacetophila (strain DSM 6194 / JCM 14653 / NBRC 101360 / PT) (Methanosaeta thermophila), this protein is Glutamate-1-semialdehyde 2,1-aminomutase.